The sequence spans 226 residues: Ribonuclease 3 (226 aa).

Residues 6-128 (INRLQRKLGY…LIGGVFLDSN (123 aa)) form the RNase III domain. Glu41 is a Mg(2+) binding site. The active site involves Asp45. Mg(2+) contacts are provided by Asp114 and Glu117. Glu117 is an active-site residue. Residues 155–225 (DPKTRLQEYL…AEQALKKLEL (71 aa)) form the DRBM domain.

Belongs to the ribonuclease III family. In terms of assembly, homodimer. The cofactor is Mg(2+).

The protein localises to the cytoplasm. The enzyme catalyses Endonucleolytic cleavage to 5'-phosphomonoester.. Functionally, digests double-stranded RNA. Involved in the processing of primary rRNA transcript to yield the immediate precursors to the large and small rRNAs (23S and 16S). Processes some mRNAs, and tRNAs when they are encoded in the rRNA operon. Processes pre-crRNA and tracrRNA of type II CRISPR loci if present in the organism. This chain is Ribonuclease 3, found in Salmonella typhi.